The sequence spans 120 residues: Large ribosomal subunit protein eL34 (120 aa).

Belongs to the eukaryotic ribosomal protein eL34 family.

This Nicotiana tabacum (Common tobacco) protein is Large ribosomal subunit protein eL34 (RPL34).